A 400-amino-acid polypeptide reads, in one-letter code: Argininosuccinate synthase (400 aa).

Alanine 9 to serine 17 lines the ATP pocket. Tyrosine 87 contributes to the L-citrulline binding site. Glycine 117 is an ATP binding site. L-aspartate contacts are provided by threonine 119, asparagine 123, and aspartate 124. Asparagine 123 provides a ligand contact to L-citrulline. 5 residues coordinate L-citrulline: arginine 127, serine 176, serine 185, glutamate 261, and tyrosine 273.

Belongs to the argininosuccinate synthase family. Type 1 subfamily. As to quaternary structure, homotetramer.

The protein localises to the cytoplasm. The enzyme catalyses L-citrulline + L-aspartate + ATP = 2-(N(omega)-L-arginino)succinate + AMP + diphosphate + H(+). The protein operates within amino-acid biosynthesis; L-arginine biosynthesis; L-arginine from L-ornithine and carbamoyl phosphate: step 2/3. The chain is Argininosuccinate synthase from Pelodictyon phaeoclathratiforme (strain DSM 5477 / BU-1).